An 87-amino-acid polypeptide reads, in one-letter code: Diazepam-binding inhibitor-like 5 (87 aa).

The ACB domain maps to 2–87 (SQVEFEMACA…VEELKKKEPC (86 aa)). An acyl-CoA contacts are provided by residues 29 to 33 (YSFYK), Lys-55, and Tyr-74.

The protein belongs to the ACBP family. Exclusively expressed in late spermatids and spermatozoa. Not found in epididymis, spleen, bone marrow, skin, liver, brain, heart, kidney, muscle.

It localises to the cytoplasm. In terms of biological role, may be involved in the energy metabolism of the mature sperm. This chain is Diazepam-binding inhibitor-like 5 (Dbil5), found in Mus musculus (Mouse).